A 265-amino-acid chain; its full sequence is Transcriptional repressor DcmR (265 aa).

The H-T-H motif DNA-binding region spans Leu-17 to Trp-36.

As to quaternary structure, monomer.

Its function is as follows. Transcriptional repressor of the dcmA gene and of its own gene. The chain is Transcriptional repressor DcmR (dcmR) from Methylorubrum extorquens (strain DSM 6343 / CIP 106787 / DM4) (Methylobacterium extorquens).